The following is a 571-amino-acid chain: Sulfite reductase [NADPH] hemoprotein beta-component (571 aa).

Cysteine 435, cysteine 441, cysteine 480, and cysteine 484 together coordinate [4Fe-4S] cluster. Cysteine 484 contributes to the siroheme binding site.

Belongs to the nitrite and sulfite reductase 4Fe-4S domain family. As to quaternary structure, alpha(8)-beta(8). The alpha component is a flavoprotein, the beta component is a hemoprotein. Requires siroheme as cofactor. The cofactor is [4Fe-4S] cluster.

It catalyses the reaction hydrogen sulfide + 3 NADP(+) + 3 H2O = sulfite + 3 NADPH + 4 H(+). The protein operates within sulfur metabolism; hydrogen sulfide biosynthesis; hydrogen sulfide from sulfite (NADPH route): step 1/1. In terms of biological role, component of the sulfite reductase complex that catalyzes the 6-electron reduction of sulfite to sulfide. This is one of several activities required for the biosynthesis of L-cysteine from sulfate. This chain is Sulfite reductase [NADPH] hemoprotein beta-component, found in Dickeya chrysanthemi (strain Ech1591) (Dickeya zeae (strain Ech1591)).